We begin with the raw amino-acid sequence, 659 residues long: Protein NEDD1 (659 aa).

WD repeat units follow at residues 1–31 (MQEN…FNPH), 32–71 (TAPH…PVPL), 75–114 (GEGQ…VHRS), 117–156 (DHKD…SSTP), 160–200 (GSNQ…PYHN), 204–244 (THKA…LVKT), 246–285 (VADA…SPIK), and 289–332 (AHKT…SAGG). T382 is modified (phosphothreonine; by PLK1). The tract at residues 383–433 (LSKEAESGKNQDFSNFDDSGKSSLGDMFSPVRDDAVVSKGGDESIGKGDGL) is disordered. S411 is modified (phosphoserine). Positions 413-432 (VRDDAVVSKGGDESIGKGDG) are enriched in basic and acidic residues. Phosphoserine; by PLK1 is present on S426. S468 and S515 each carry phosphoserine. The segment covering 508–522 (ETGNLNASPSSNQTR) has biased composition (polar residues). A disordered region spans residues 508–531 (ETGNLNASPSSNQTRSPEKFEKPE). At T549 the chain carries Phosphothreonine; by CDK1. S636 carries the phosphoserine; by PLK1 modification.

In terms of assembly, interacts with FAM29A. Interacts with HSPA1A and HSPA1B. Interacts with gamma-tubulin in a HSPA1A/B-dependent manner. Post-translationally, during mitosis, prior phosphorylation on Thr-549 by CDK1 promotes subsequent phosphorylation by PLK1 on Thr-382, Ser-426 and Ser-636. Phosphorylated NEDD1 can interact with gamma-tubulin for targeting the gamma-tubulin ring complex (gTuRC) to the centrosome, an important step for spindle formation.

It is found in the cytoplasm. The protein resides in the cytoskeleton. Its subcellular location is the microtubule organizing center. The protein localises to the centrosome. Its function is as follows. Required for mitosis progression. Promotes the nucleation of microtubules from the spindle. The chain is Protein NEDD1 (NEDD1) from Bos taurus (Bovine).